The sequence spans 115 residues: MSKIIQQLEQEQLRTDIPAFAQGDTVRVQVRVKEGGKERLQAFEGIVIAKRNRGLHSAFTVRKISNGEGVERVFQTHSPLIHSVELKRRGDVRRAKLYYLRNLSGKAARIKEKLN.

Belongs to the bacterial ribosomal protein bL19 family.

In terms of biological role, this protein is located at the 30S-50S ribosomal subunit interface and may play a role in the structure and function of the aminoacyl-tRNA binding site. The protein is Large ribosomal subunit protein bL19 of Aeromonas hydrophila subsp. hydrophila (strain ATCC 7966 / DSM 30187 / BCRC 13018 / CCUG 14551 / JCM 1027 / KCTC 2358 / NCIMB 9240 / NCTC 8049).